The sequence spans 242 residues: 1-(5-phosphoribosyl)-5-[(5-phosphoribosylamino)methylideneamino] imidazole-4-carboxamide isomerase (242 aa).

The Proton acceptor role is filled by Asp10.

It belongs to the HisA/HisF family.

It localises to the cytoplasm. The catalysed reaction is 1-(5-phospho-beta-D-ribosyl)-5-[(5-phospho-beta-D-ribosylamino)methylideneamino]imidazole-4-carboxamide = 5-[(5-phospho-1-deoxy-D-ribulos-1-ylimino)methylamino]-1-(5-phospho-beta-D-ribosyl)imidazole-4-carboxamide. It functions in the pathway amino-acid biosynthesis; L-histidine biosynthesis; L-histidine from 5-phospho-alpha-D-ribose 1-diphosphate: step 4/9. In Corynebacterium diphtheriae (strain ATCC 700971 / NCTC 13129 / Biotype gravis), this protein is 1-(5-phosphoribosyl)-5-[(5-phosphoribosylamino)methylideneamino] imidazole-4-carboxamide isomerase.